The following is a 551-amino-acid chain: Hydroxymethylpyrimidine/phosphomethylpyrimidine kinase THI20 (551 aa).

Residue glutamine 64 coordinates 4-amino-5-hydroxymethyl-2-methylpyrimidine. The active-site Nucleophile is cysteine 468. The active-site Proton donor is glutamate 540.

The protein in the N-terminal section; belongs to the ThiD family. This sequence in the C-terminal section; belongs to the thiaminase-2 family.

The enzyme catalyses 4-amino-5-hydroxymethyl-2-methylpyrimidine + ATP = 4-amino-2-methyl-5-(phosphooxymethyl)pyrimidine + ADP + H(+). It catalyses the reaction 4-amino-2-methyl-5-(phosphooxymethyl)pyrimidine + ATP = 4-amino-2-methyl-5-(diphosphooxymethyl)pyrimidine + ADP. It carries out the reaction thiamine + H2O = 5-(2-hydroxyethyl)-4-methylthiazole + 4-amino-5-hydroxymethyl-2-methylpyrimidine + H(+). It participates in cofactor biosynthesis; thiamine diphosphate biosynthesis; 4-amino-2-methyl-5-diphosphomethylpyrimidine from 5-amino-1-(5-phospho-D-ribosyl)imidazole: step 2/3. It functions in the pathway cofactor biosynthesis; thiamine diphosphate biosynthesis; 4-amino-2-methyl-5-diphosphomethylpyrimidine from 5-amino-1-(5-phospho-D-ribosyl)imidazole: step 3/3. Trifunctional protein with both thiamine biosynthetic and degradative activity. Within the thiamine biosynthesis pathway, catalyzes the phosphorylation of hydroxymethylpyrimidine (HMP) to hydroxymethylpyrimidine phosphate (HMP-P), as well as of HMP-P to HMP-PP. Also has thiaminase II activity and degrades thiamine using water as the nucleophile, resulting only in the formation of HMP (4-amino-2-methyl-5-hydroxymethylpyrimidine) and Thz (4-methyl-5-thiazole ethanol). This Saccharomyces cerevisiae (strain ATCC 204508 / S288c) (Baker's yeast) protein is Hydroxymethylpyrimidine/phosphomethylpyrimidine kinase THI20.